The following is a 57-amino-acid chain: Large ribosomal subunit protein bL32 (57 aa).

The disordered stretch occupies residues 1-21 (MAVQQRRSSKHRRDKRRSHDA). Positions 7 to 18 (RSSKHRRDKRRS) are enriched in basic residues.

This sequence belongs to the bacterial ribosomal protein bL32 family.

This is Large ribosomal subunit protein bL32 (rpmF) from Mycoplasma pneumoniae (strain ATCC 29342 / M129 / Subtype 1) (Mycoplasmoides pneumoniae).